A 105-amino-acid chain; its full sequence is uncharacterized protein (105 aa).

Residues 13 to 35 (LLFAFVVVIVVLTLSYVYAQNII) traverse the membrane as a helical segment.

The protein localises to the membrane. This is an uncharacterized protein from Archaeoglobus fulgidus (strain ATCC 49558 / DSM 4304 / JCM 9628 / NBRC 100126 / VC-16).